A 163-amino-acid chain; its full sequence is SsrA-binding protein (163 aa).

The protein belongs to the SmpB family.

The protein resides in the cytoplasm. In terms of biological role, required for rescue of stalled ribosomes mediated by trans-translation. Binds to transfer-messenger RNA (tmRNA), required for stable association of tmRNA with ribosomes. tmRNA and SmpB together mimic tRNA shape, replacing the anticodon stem-loop with SmpB. tmRNA is encoded by the ssrA gene; the 2 termini fold to resemble tRNA(Ala) and it encodes a 'tag peptide', a short internal open reading frame. During trans-translation Ala-aminoacylated tmRNA acts like a tRNA, entering the A-site of stalled ribosomes, displacing the stalled mRNA. The ribosome then switches to translate the ORF on the tmRNA; the nascent peptide is terminated with the 'tag peptide' encoded by the tmRNA and targeted for degradation. The ribosome is freed to recommence translation, which seems to be the essential function of trans-translation. This is SsrA-binding protein from Shewanella putrefaciens (strain CN-32 / ATCC BAA-453).